The primary structure comprises 368 residues: N-acetylneuraminate epimerase (368 aa).

Residues 1–19 form the signal peptide; it reads MNKTITALAILMASFAANA. Kelch repeat units lie at residues 40 to 84, 86 to 137, 139 to 173, 174 to 219, 222 to 265, 287 to 336, and 338 to 367; these read TVYI…AFID, NLYV…FVHN, KAYV…KINA, HYFD…VNKG, TWLI…VAGG, ENYQ…PWNN, and LLII…VTVQ. Glu-228 functions as the Proton acceptor in the catalytic mechanism.

The protein belongs to the NanM family. As to quaternary structure, homodimer.

The protein localises to the periplasm. It catalyses the reaction N-acetyl-alpha-neuraminate = N-acetyl-beta-neuraminate. Converts alpha-N-acetylneuranimic acid (Neu5Ac) to the beta-anomer, accelerating the equilibrium between the alpha- and beta-anomers. Probably facilitates sialidase-negative bacteria to compete successfully for limited amounts of extracellular Neu5Ac, which is likely taken up in the beta-anomer. In addition, the rapid removal of sialic acid from solution might be advantageous to the bacterium to damp down host responses. This is N-acetylneuraminate epimerase from Escherichia coli O157:H7.